Consider the following 150-residue polypeptide: UPF0756 membrane protein PM0771 (150 aa).

The next 4 helical transmembrane spans lie at leucine 12–leucine 34, histidine 52–glycine 72, leucine 79–tryptophan 99, and isoleucine 123–leucine 143.

Belongs to the UPF0756 family.

The protein resides in the cell membrane. The chain is UPF0756 membrane protein PM0771 from Pasteurella multocida (strain Pm70).